The following is a 168-amino-acid chain: Large ribosomal subunit protein uL10 (168 aa).

This sequence belongs to the universal ribosomal protein uL10 family. As to quaternary structure, part of the ribosomal stalk of the 50S ribosomal subunit. The N-terminus interacts with L11 and the large rRNA to form the base of the stalk. The C-terminus forms an elongated spine to which L12 dimers bind in a sequential fashion forming a multimeric L10(L12)X complex.

Its function is as follows. Forms part of the ribosomal stalk, playing a central role in the interaction of the ribosome with GTP-bound translation factors. This Clostridioides difficile (strain 630) (Peptoclostridium difficile) protein is Large ribosomal subunit protein uL10.